The chain runs to 485 residues: Adenosylhomocysteinase (485 aa).

Residues Thr-64, Asp-139, and Glu-205 each contribute to the substrate site. Position 206-208 (206-208 (TTT)) interacts with NAD(+). Lys-235 and Asp-239 together coordinate substrate. NAD(+)-binding positions include Asn-240, 269–274 (GYGDVG), Glu-292, Asn-327, 348–350 (IGH), and Asn-397.

This sequence belongs to the adenosylhomocysteinase family. Homotetramer. Requires NAD(+) as cofactor.

It catalyses the reaction S-adenosyl-L-homocysteine + H2O = L-homocysteine + adenosine. It functions in the pathway amino-acid biosynthesis; L-homocysteine biosynthesis; L-homocysteine from S-adenosyl-L-homocysteine: step 1/1. Functionally, adenosylhomocysteine is a competitive inhibitor of S-adenosyl-L-methionine-dependent methyl transferase reactions; therefore adenosylhomocysteinase may play a key role in the control of methylations via regulation of the intracellular concentration of adenosylhomocysteine. In Triticum aestivum (Wheat), this protein is Adenosylhomocysteinase (SAHH).